The chain runs to 473 residues: Bactericidal permeability-increasing protein (473 aa).

A signal peptide spans 1-18 (MVLCCWLALVALIPMTLS). Residues 19–29 (INPGVKVRLTG) form a central sheet, part 1 region. Residues 28-209 (TGKGLEYGRQ…SDLNPQLKTL (182 aa)) are N-terminal barrel. A disulfide bond links Cys-153 and Cys-192. The central sheet, part 2 stretch occupies residues 211–275 (VLAKVDQYAE…INNMLYISVS (65 aa)). Residues 225 to 230 (MVSSPT) form a cleavage sites for elastase region. The C-terminal barrel stretch occupies residues 276-446 (AFTINSAAFV…LAKGYPLPTL (171 aa)). N-linked (GlcNAc...) asparagine glycosylation is present at Asn-365. Positions 453–472 (NTELQVLKDYMLIGTDVQFT) are central sheet, part 3.

The protein belongs to the BPI/LBP/Plunc superfamily. BPI/LBP family. Monomer. Homodimer; disulfide-linked. In terms of tissue distribution, expressed in spleen. Lower expression in gill, head kidney, entire kidney, skin, intestine and blood and lowest expression in liver and muscle.

The protein resides in the secreted. In terms of biological role, the cytotoxic action of BPI is limited to many species of Gram-negative bacteria; this specificity may be explained by a strong affinity of the very basic N-terminal half for the negatively charged lipopolysaccharides that are unique to the Gram-negative bacterial outer envelope. Exhibits neutralizing capacity towards P.aeruginosa lipopolysaccharides (LPS) and has bactericidal activity against multiple drug resistant (MDR) P.aeruginosa strains derived from people with cystic fibrosis. Has antibacterial activity against E.coli, but not against S.iniae. This is Bactericidal permeability-increasing protein from Sebastes schlegelii (Korean rockfish).